Reading from the N-terminus, the 252-residue chain is ATP synthase subunit a, chloroplastic (252 aa).

The next 5 helical transmembrane spans lie at glycine 41 to alanine 61, valine 100 to leucine 120, aspartate 138 to isoleucine 158, leucine 204 to leucine 224, and glycine 225 to glycine 245.

It belongs to the ATPase A chain family. As to quaternary structure, F-type ATPases have 2 components, CF(1) - the catalytic core - and CF(0) - the membrane proton channel. CF(1) has five subunits: alpha(3), beta(3), gamma(1), delta(1), epsilon(1). CF(0) has four main subunits: a, b, b' and c.

The protein localises to the plastid. It localises to the chloroplast thylakoid membrane. Functionally, key component of the proton channel; it plays a direct role in the translocation of protons across the membrane. This Oedogonium cardiacum (Filamentous green alga) protein is ATP synthase subunit a, chloroplastic.